The chain runs to 388 residues: UDP-4-amino-4-deoxy-L-arabinose--oxoglutarate aminotransferase (388 aa).

Residue K183 is modified to N6-(pyridoxal phosphate)lysine.

Belongs to the DegT/DnrJ/EryC1 family. ArnB subfamily. Homodimer. Pyridoxal 5'-phosphate is required as a cofactor.

It catalyses the reaction UDP-4-amino-4-deoxy-beta-L-arabinose + 2-oxoglutarate = UDP-beta-L-threo-pentopyranos-4-ulose + L-glutamate. The protein operates within nucleotide-sugar biosynthesis; UDP-4-deoxy-4-formamido-beta-L-arabinose biosynthesis; UDP-4-deoxy-4-formamido-beta-L-arabinose from UDP-alpha-D-glucuronate: step 2/3. Its pathway is bacterial outer membrane biogenesis; lipopolysaccharide biosynthesis. In terms of biological role, catalyzes the conversion of UDP-4-keto-arabinose (UDP-Ara4O) to UDP-4-amino-4-deoxy-L-arabinose (UDP-L-Ara4N). The modified arabinose is attached to lipid A and is required for resistance to polymyxin and cationic antimicrobial peptides. The polypeptide is UDP-4-amino-4-deoxy-L-arabinose--oxoglutarate aminotransferase (Shewanella sediminis (strain HAW-EB3)).